The following is a 1118-amino-acid chain: Cytospin-A (1118 aa).

The disordered stretch occupies residues 1-176; that stretch reads MKKASRSVGS…SKSKSDNQIS (176 aa). Residues 29-52 are compositionally biased toward polar residues; the sequence is ESGSSLSAVTKLSKPGTSASLLKT. Positions 79-119 are enriched in low complexity; sequence STCASTVSSTTGTTMSTLENKPRTVAGSTARRSTSSGTKES. Composition is skewed to basic and acidic residues over residues 120–131 and 158–171; these read SSSRERIRDRSR and TNPE…KSKS. The stretch at 193 to 281 forms a coiled coil; the sequence is KTKDVEILHL…LNALGFSLEQ (89 aa). Disordered stretches follow at residues 299 to 324 and 359 to 391; these read ITAG…GSME and SSDD…NASE. Residues 359–373 are compositionally biased toward low complexity; it reads SSDDALDAPSSSESE. Coiled coils occupy residues 396 to 450 and 488 to 808; these read CLTE…MESL and RYME…RGRV. 2 disordered regions span residues 856–879 and 921–1002; these read PSPA…PPAA and TSST…RKDP. A compositionally biased stretch (low complexity) spans 937-946; sequence ESAKSISVSR. Positions 947 to 957 are enriched in basic and acidic residues; it reads RSSEEIKRDIS. Residues 972–991 show a composition bias toward low complexity; sequence TTSPQLSLSSSPTASVTPTT. The Calponin-homology (CH) domain maps to 1012–1117; that stretch reads GSKRNALLKW…YVTAIYKYFE (106 aa).

It belongs to the cytospin-A family. In terms of assembly, may interact with both microtubules and actin cytoskeleton.

It localises to the cytoplasm. It is found in the cytoskeleton. The protein localises to the spindle. Its subcellular location is the cell junction. The protein resides in the gap junction. Functionally, involved in cytokinesis and spindle organization. May play a role in actin cytoskeleton organization and microtubule stabilization and hence required for proper cell adhesion and migration. The sequence is that of Cytospin-A (SPECC1L) from Gallus gallus (Chicken).